Reading from the N-terminus, the 1227-residue chain is Protein U7 (1227 aa).

Belongs to the herpesviridae US22 family.

This is Protein U7 (U7/U5) from Homo sapiens (Human).